The primary structure comprises 284 residues: 2-dehydro-3-deoxyphosphooctonate aldolase (284 aa).

Belongs to the KdsA family.

It is found in the cytoplasm. The catalysed reaction is D-arabinose 5-phosphate + phosphoenolpyruvate + H2O = 3-deoxy-alpha-D-manno-2-octulosonate-8-phosphate + phosphate. It participates in carbohydrate biosynthesis; 3-deoxy-D-manno-octulosonate biosynthesis; 3-deoxy-D-manno-octulosonate from D-ribulose 5-phosphate: step 2/3. Its pathway is bacterial outer membrane biogenesis; lipopolysaccharide biosynthesis. In Yersinia pseudotuberculosis serotype O:1b (strain IP 31758), this protein is 2-dehydro-3-deoxyphosphooctonate aldolase.